We begin with the raw amino-acid sequence, 1048 residues long: Probable inactive receptor kinase At5g10020 (1048 aa).

The first 21 residues, Met-1–Ala-21, serve as a signal peptide directing secretion. LRR repeat units lie at residues Arg-100–Gly-120, Ser-124–Leu-146, Ser-148–Asn-169, Gln-172–Leu-194, Asn-196–Asn-217, Thr-224–Gly-246, Asn-250–Pro-272, Ser-273–Gln-294, Pro-298–Ser-319, Thr-320–Cys-342, Thr-365–Phe-387, Arg-389–Ser-411, Gln-412–Thr-433, Ser-436–Arg-457, Gln-469–Met-491, Lys-493–Ser-516, Gly-517–Gln-539, and Met-540–Ser-560. A helical membrane pass occupies residues Ile-602–Tyr-622. The disordered stretch occupies residues Glu-696–Phe-733. Over residues Ser-716–Phe-733 the composition is skewed to low complexity. The residue at position 744 (Ser-744) is a Phosphoserine. The region spanning Arg-768–Ser-1045 is the Protein kinase domain. ATP is bound by residues Leu-774 to Leu-782 and Lys-796.

This sequence belongs to the protein kinase superfamily.

It localises to the membrane. This chain is Probable inactive receptor kinase At5g10020, found in Arabidopsis thaliana (Mouse-ear cress).